A 397-amino-acid polypeptide reads, in one-letter code: Glia-derived nexin (397 aa).

Residues 1-19 form the signal peptide; the sequence is MNWHFPFFILTTVTLSSVY. Residue N159 is glycosylated (N-linked (GlcNAc...) asparagine).

Belongs to the serpin family.

The protein localises to the secreted. Its subcellular location is the extracellular space. Functionally, serine protease inhibitor with activity toward thrombin, trypsin, and urokinase. Promotes neurite extension by inhibiting thrombin. Binds heparin. This chain is Glia-derived nexin (Serpine2), found in Rattus norvegicus (Rat).